Consider the following 100-residue polypeptide: Urease subunit gamma (100 aa).

It belongs to the urease gamma subunit family. Heterotrimer of UreA (gamma), UreB (beta) and UreC (alpha) subunits. Three heterotrimers associate to form the active enzyme.

It localises to the cytoplasm. The enzyme catalyses urea + 2 H2O + H(+) = hydrogencarbonate + 2 NH4(+). It functions in the pathway nitrogen metabolism; urea degradation; CO(2) and NH(3) from urea (urease route): step 1/1. The sequence is that of Urease subunit gamma from Rhodococcus opacus (strain B4).